The primary structure comprises 252 residues: HTH-type transcriptional regulator XynR (252 aa).

The HTH iclR-type domain occupies 4-66 (IQSVERALQI…PENGKYRLGM (63 aa)). Residues 25-45 (KITDISKLMGLSKSTLHSLLK) constitute a DNA-binding region (H-T-H motif). The 170-residue stretch at 81 to 250 (IRQKAKGWLT…GLALSRALGY (170 aa)) folds into the IclR-ED domain.

With respect to regulation, activity may be controlled by xylonate. Involved in regulation of xylonate catabolism. Represses the expression of both yagA and yagEF operons. Binds mainly at a single site within the spacer of the bidirectional transcription units yagA and yagEF. This chain is HTH-type transcriptional regulator XynR, found in Escherichia coli (strain K12).